Consider the following 168-residue polypeptide: Lipoprotein signal peptidase (168 aa).

4 helical membrane-spanning segments follow: residues 15–35 (WLWL…IVME), 47–67 (VLPF…SFLS), 75–95 (WLFT…MSKL), and 107–127 (AMII…GFVV). Catalysis depends on residues Asp-128 and Asp-146. The chain crosses the membrane as a helical span at residues 141 to 161 (AFNLADTAICLGAAMIILDGF).

It belongs to the peptidase A8 family.

It is found in the cell inner membrane. It carries out the reaction Release of signal peptides from bacterial membrane prolipoproteins. Hydrolyzes -Xaa-Yaa-Zaa-|-(S,diacylglyceryl)Cys-, in which Xaa is hydrophobic (preferably Leu), and Yaa (Ala or Ser) and Zaa (Gly or Ala) have small, neutral side chains.. Its pathway is protein modification; lipoprotein biosynthesis (signal peptide cleavage). In terms of biological role, this protein specifically catalyzes the removal of signal peptides from prolipoproteins. The sequence is that of Lipoprotein signal peptidase from Vibrio vulnificus (strain CMCP6).